Reading from the N-terminus, the 4115-residue chain is Transcription-associated protein 1 (4115 aa).

Residues 1 to 11 show a composition bias toward polar residues; that stretch reads MDPSIPSTSHR. 2 disordered regions span residues 1-21 and 543-563; these read MDPSIPSTSHRSVPPDRGVQP and ESEQKRNELPTPTKEHTKKTS. Positions 544–563 are enriched in basic and acidic residues; sequence SEQKRNELPTPTKEHTKKTS. TPR repeat units lie at residues 1341 to 1374 and 1820 to 1853; these read LDGLQRFVFICPEGFEFEKDSEIYKRYLVHLLDL and QDYDMFFNVVSVFMGKFQTDFTFVREYLEVEVIP. The tract at residues 2678 to 2701 is disordered; that stretch reads LEEPEPMEVDQPKNAPAEEPKDNK. An FAT domain is found at 2808–3421; the sequence is LIEFISSKHE…SNGASKVSKS (614 aa). Residues 2855-2888 form a TPR 3 repeat; that stretch reads IETLESLGALYKELAEFDQYSAIWERRSVFPETM. The 361-residue stretch at 3740 to 4100 folds into the PI3K/PI4K catalytic domain; sequence EPYFEIVMRG…CNSLIIRAKD (361 aa). The G-loop stretch occupies residues 3746-3752; the sequence is VMRGGQV. Residues 3959-3967 form a catalytic loop region; that stretch reads NLSPMTPHQ. Residues 3979 to 4006 are activation loop; sequence NPFYRFELGTGQLMDIEHFAHEVPFRLT. The 33-residue stretch at 4083–4115 folds into the FATC domain; that stretch reads DAKVKKDDCNSLIIRAKDSDNLSRMPPTYHAWF.

Belongs to the PI3/PI4-kinase family. TRA1 subfamily.

The protein resides in the nucleus. Its function is as follows. Influences germ cell fate in hermaphrodites. Acts downstream of tra-2 and tra-3 and through the Tip60 histone acetyltransferase complex to regulate germ cell fate decisions. Required for spermatogenesis and embryonic development. Acts with tra-2 to promote expression of fog-3 and control male tail development. Involved in the negative regulation of vulval development. The polypeptide is Transcription-associated protein 1 (Caenorhabditis briggsae).